The following is a 417-amino-acid chain: UDP-N-acetylglucosamine 1-carboxyvinyltransferase (417 aa).

22–23 (KN) contributes to the phosphoenolpyruvate binding site. A UDP-N-acetyl-alpha-D-glucosamine-binding site is contributed by Arg-93. Cys-117 (proton donor) is an active-site residue. Position 117 is a 2-(S-cysteinyl)pyruvic acid O-phosphothioketal (Cys-117). Residues 122 to 126 (RPVDQ), Asp-305, and Ile-327 contribute to the UDP-N-acetyl-alpha-D-glucosamine site.

It belongs to the EPSP synthase family. MurA subfamily.

The protein localises to the cytoplasm. It carries out the reaction phosphoenolpyruvate + UDP-N-acetyl-alpha-D-glucosamine = UDP-N-acetyl-3-O-(1-carboxyvinyl)-alpha-D-glucosamine + phosphate. Its pathway is cell wall biogenesis; peptidoglycan biosynthesis. In terms of biological role, cell wall formation. Adds enolpyruvyl to UDP-N-acetylglucosamine. In Nitrosomonas eutropha (strain DSM 101675 / C91 / Nm57), this protein is UDP-N-acetylglucosamine 1-carboxyvinyltransferase.